The sequence spans 295 residues: Shikimate dehydrogenase (NADP(+)) (295 aa).

Shikimate contacts are provided by residues 21 to 23 and Thr68; that span reads SLS. Lys72 serves as the catalytic Proton acceptor. Shikimate contacts are provided by Asn93 and Asp108. Residues 132–136, 156–161, and Leu228 each bind NADP(+); these read GAGGA and NRTPER. Tyr230 is a shikimate binding site. Gly251 contributes to the NADP(+) binding site.

It belongs to the shikimate dehydrogenase family. In terms of assembly, homodimer.

The catalysed reaction is shikimate + NADP(+) = 3-dehydroshikimate + NADPH + H(+). It participates in metabolic intermediate biosynthesis; chorismate biosynthesis; chorismate from D-erythrose 4-phosphate and phosphoenolpyruvate: step 4/7. Its function is as follows. Involved in the biosynthesis of the chorismate, which leads to the biosynthesis of aromatic amino acids. Catalyzes the reversible NADPH linked reduction of 3-dehydroshikimate (DHSA) to yield shikimate (SA). The protein is Shikimate dehydrogenase (NADP(+)) of Moorella thermoacetica (strain ATCC 39073 / JCM 9320).